Here is a 238-residue protein sequence, read N- to C-terminus: Uroporphyrinogen-III C-methyltransferase (238 aa).

Residues proline 11, 87–89 (GGD), 117–118 (TS), and methionine 170 each bind S-adenosyl-L-homocysteine.

The protein belongs to the precorrin methyltransferase family. Monomer.

It catalyses the reaction uroporphyrinogen III + 2 S-adenosyl-L-methionine = precorrin-2 + 2 S-adenosyl-L-homocysteine + H(+). The protein operates within cofactor biosynthesis; adenosylcobalamin biosynthesis; precorrin-2 from uroporphyrinogen III: step 1/1. It functions in the pathway porphyrin-containing compound metabolism; siroheme biosynthesis; precorrin-2 from uroporphyrinogen III: step 1/1. With respect to regulation, SUMT exhibits a substrate inhibition phenomenon at uroporphyrinogen III concentrations above 0.5 uM; this property might play a regulatory role in cobalamin biosynthesis. In terms of biological role, catalyzes the two successive C-2 and C-7 methylation reactions involved in the conversion of uroporphyrinogen III to precorrin-2 via the intermediate formation of precorrin-1. It is a step in the biosynthesis of both cobalamin (vitamin B12) and siroheme. The protein is Uroporphyrinogen-III C-methyltransferase of Priestia megaterium (Bacillus megaterium).